The primary structure comprises 495 residues: UDP-N-acetylmuramate--L-alanine ligase (495 aa).

153–159 is an ATP binding site; it reads GTHGKTT.

This sequence belongs to the MurCDEF family.

It is found in the cytoplasm. The enzyme catalyses UDP-N-acetyl-alpha-D-muramate + L-alanine + ATP = UDP-N-acetyl-alpha-D-muramoyl-L-alanine + ADP + phosphate + H(+). It functions in the pathway cell wall biogenesis; peptidoglycan biosynthesis. Functionally, cell wall formation. This is UDP-N-acetylmuramate--L-alanine ligase from Gloeothece citriformis (strain PCC 7424) (Cyanothece sp. (strain PCC 7424)).